The chain runs to 241 residues: ATP synthase subunit a (241 aa).

Helical transmembrane passes span 29 to 49 (NSSF…LFGI), 54 to 74 (VIPG…ISII), 86 to 106 (IPLI…GVLP), 114 to 134 (HVIV…IVGF), 153 to 173 (WLAP…PVSL), 177 to 197 (LAAN…FIVN), 200 to 220 (IFFT…EVFV), and 221 to 241 (AILQ…DAVK).

The protein belongs to the ATPase A chain family. As to quaternary structure, F-type ATPases have 2 components, CF(1) - the catalytic core - and CF(0) - the membrane proton channel. CF(1) has five subunits: alpha(3), beta(3), gamma(1), delta(1), epsilon(1). CF(0) has three main subunits: a(1), b(2) and c(9-12). The alpha and beta chains form an alternating ring which encloses part of the gamma chain. CF(1) is attached to CF(0) by a central stalk formed by the gamma and epsilon chains, while a peripheral stalk is formed by the delta and b chains.

The protein localises to the cell membrane. Its function is as follows. Key component of the proton channel; it plays a direct role in the translocation of protons across the membrane. The chain is ATP synthase subunit a from Wolbachia pipientis wMel.